Here is a 483-residue protein sequence, read N- to C-terminus: ATP synthase subunit beta (483 aa).

169–176 (GGAGVGKT) contributes to the ATP binding site.

The protein belongs to the ATPase alpha/beta chains family. F-type ATPases have 2 components, CF(1) - the catalytic core - and CF(0) - the membrane proton channel. CF(1) has five subunits: alpha(3), beta(3), gamma(1), delta(1), epsilon(1). CF(0) has three main subunits: a(1), b(2) and c(9-12). The alpha and beta chains form an alternating ring which encloses part of the gamma chain. CF(1) is attached to CF(0) by a central stalk formed by the gamma and epsilon chains, while a peripheral stalk is formed by the delta and b chains.

It is found in the cell membrane. The catalysed reaction is ATP + H2O + 4 H(+)(in) = ADP + phosphate + 5 H(+)(out). Functionally, produces ATP from ADP in the presence of a proton gradient across the membrane. The catalytic sites are hosted primarily by the beta subunits. In Rhodococcus jostii (strain RHA1), this protein is ATP synthase subunit beta.